A 425-amino-acid polypeptide reads, in one-letter code: Oxytetracycline polyketide putative beta-ketoacyl synthase 1 (425 aa).

A Ketosynthase family 3 (KS3) domain is found at 7–420 (ARRVVITGIG…GFQSAIVLTE (414 aa)). Residues Cys173, His313, and His350 each act as for beta-ketoacyl synthase activity in the active site.

The protein belongs to the thiolase-like superfamily. Beta-ketoacyl-ACP synthases family.

It participates in antibiotic biosynthesis; oxytetracycline biosynthesis. The sequence is that of Oxytetracycline polyketide putative beta-ketoacyl synthase 1 from Streptomyces rimosus.